The following is a 476-amino-acid chain: Adenosylhomocysteinase (476 aa).

3 residues coordinate substrate: Thr67, Asp142, and Glu202. An NAD(+)-binding site is contributed by 203-205 (TTT). The substrate site is built by Lys232 and Asp236. Residues Asn237, 266–271 (GYGDVG), Glu289, Asn324, 345–347 (IGH), and Asn390 contribute to the NAD(+) site.

Belongs to the adenosylhomocysteinase family. NAD(+) serves as cofactor.

It is found in the cytoplasm. It catalyses the reaction S-adenosyl-L-homocysteine + H2O = L-homocysteine + adenosine. It functions in the pathway amino-acid biosynthesis; L-homocysteine biosynthesis; L-homocysteine from S-adenosyl-L-homocysteine: step 1/1. May play a key role in the regulation of the intracellular concentration of adenosylhomocysteine. This chain is Adenosylhomocysteinase, found in Parasynechococcus marenigrum (strain WH8102).